Here is a 249-residue protein sequence, read N- to C-terminus: INO80 complex subunit 1 (249 aa).

C2H2-type zinc fingers lie at residues 73–100 and 106–131; these read YTCEWDDCPRKGMVQTSRFALVAHLRSH and FICSVPECDRSFTRSDALAKHMRTVH.

Component of the INO80 chromatin remodeling complex.

The protein localises to the nucleus. It is found in the cytoplasm. Its function is as follows. Component of the INO80 complex which remodels chromatin by shifting nucleosomes and is involved in DNA repair. The polypeptide is INO80 complex subunit 1 (iec1) (Schizosaccharomyces pombe (strain 972 / ATCC 24843) (Fission yeast)).